The primary structure comprises 485 residues: UDP-N-acetylmuramate--L-alanine ligase (485 aa).

129 to 135 (GTHGKTT) provides a ligand contact to ATP.

The protein belongs to the MurCDEF family.

The protein resides in the cytoplasm. The enzyme catalyses UDP-N-acetyl-alpha-D-muramate + L-alanine + ATP = UDP-N-acetyl-alpha-D-muramoyl-L-alanine + ADP + phosphate + H(+). Its pathway is cell wall biogenesis; peptidoglycan biosynthesis. Cell wall formation. The polypeptide is UDP-N-acetylmuramate--L-alanine ligase (Vibrio parahaemolyticus serotype O3:K6 (strain RIMD 2210633)).